Reading from the N-terminus, the 467-residue chain is RuvB-like helicase 2 (467 aa).

ATP is bound at residue 73–80 (GPPSTGKT).

It belongs to the RuvB family. May form heterododecamers with RVB1. Component of the SWR1 chromatin remodeling complex, the INO80 chromatin remodeling complex, and of the R2TP complex.

The protein localises to the nucleus. It catalyses the reaction ATP + H2O = ADP + phosphate + H(+). DNA helicase which participates in several chromatin remodeling complexes, including the SWR1 and the INO80 complexes. The SWR1 complex mediates the ATP-dependent exchange of histone H2A for the H2A variant HZT1 leading to transcriptional regulation of selected genes by chromatin remodeling. The INO80 complex remodels chromatin by shifting nucleosomes and is involved in DNA repair. Also involved in pre-rRNA processing. The polypeptide is RuvB-like helicase 2 (RVB2) (Kluyveromyces lactis (strain ATCC 8585 / CBS 2359 / DSM 70799 / NBRC 1267 / NRRL Y-1140 / WM37) (Yeast)).